Consider the following 318-residue polypeptide: Holliday junction branch migration complex subunit RuvB (318 aa).

The tract at residues 1–168 (MPENLEIRPS…FGYVAKIVDY (168 aa)) is large ATPase domain (RuvB-L). I7, R8, G49, K52, T53, T54, R158, Y168, and R205 together coordinate ATP. T53 lines the Mg(2+) pocket. Residues 169–239 (TLEDMIQIIR…IVNKTFDSIG (71 aa)) form a small ATPAse domain (RuvB-S) region. The tract at residues 242–318 (NQGLSQINIE…RDYLLELKTN (77 aa)) is head domain (RuvB-H). DNA contacts are provided by R278, K297, and R302.

Belongs to the RuvB family. In terms of assembly, homohexamer. Forms an RuvA(8)-RuvB(12)-Holliday junction (HJ) complex. HJ DNA is sandwiched between 2 RuvA tetramers; dsDNA enters through RuvA and exits via RuvB. An RuvB hexamer assembles on each DNA strand where it exits the tetramer. Each RuvB hexamer is contacted by two RuvA subunits (via domain III) on 2 adjacent RuvB subunits; this complex drives branch migration. In the full resolvosome a probable DNA-RuvA(4)-RuvB(12)-RuvC(2) complex forms which resolves the HJ.

It is found in the cytoplasm. The enzyme catalyses ATP + H2O = ADP + phosphate + H(+). In terms of biological role, the RuvA-RuvB-RuvC complex processes Holliday junction (HJ) DNA during genetic recombination and DNA repair, while the RuvA-RuvB complex plays an important role in the rescue of blocked DNA replication forks via replication fork reversal (RFR). RuvA specifically binds to HJ cruciform DNA, conferring on it an open structure. The RuvB hexamer acts as an ATP-dependent pump, pulling dsDNA into and through the RuvAB complex. RuvB forms 2 homohexamers on either side of HJ DNA bound by 1 or 2 RuvA tetramers; 4 subunits per hexamer contact DNA at a time. Coordinated motions by a converter formed by DNA-disengaged RuvB subunits stimulates ATP hydrolysis and nucleotide exchange. Immobilization of the converter enables RuvB to convert the ATP-contained energy into a lever motion, pulling 2 nucleotides of DNA out of the RuvA tetramer per ATP hydrolyzed, thus driving DNA branch migration. The RuvB motors rotate together with the DNA substrate, which together with the progressing nucleotide cycle form the mechanistic basis for DNA recombination by continuous HJ branch migration. Branch migration allows RuvC to scan DNA until it finds its consensus sequence, where it cleaves and resolves cruciform DNA. This chain is Holliday junction branch migration complex subunit RuvB, found in Mesomycoplasma hyopneumoniae (strain 232) (Mycoplasma hyopneumoniae).